The sequence spans 318 residues: NAD kinase (318 aa).

Residue Asp84 is the Proton acceptor of the active site. Residues 84–85 (DG), Arg89, 159–160 (NE), Arg170, Asp189, and 200–205 (TAYAFS) each bind NAD(+).

The protein belongs to the NAD kinase family. Requires a divalent metal cation as cofactor.

The protein localises to the cytoplasm. It carries out the reaction NAD(+) + ATP = ADP + NADP(+) + H(+). Functionally, involved in the regulation of the intracellular balance of NAD and NADP, and is a key enzyme in the biosynthesis of NADP. Catalyzes specifically the phosphorylation on 2'-hydroxyl of the adenosine moiety of NAD to yield NADP. This Cutibacterium acnes (strain DSM 16379 / KPA171202) (Propionibacterium acnes) protein is NAD kinase.